The sequence spans 131 residues: Large ribosomal subunit protein bL19 (131 aa).

The span at 111–124 (RIAERAERGSEKGK) shows a compositional bias: basic and acidic residues. The disordered stretch occupies residues 111–131 (RIAERAERGSEKGKTTPAAAE).

The protein belongs to the bacterial ribosomal protein bL19 family.

Functionally, this protein is located at the 30S-50S ribosomal subunit interface and may play a role in the structure and function of the aminoacyl-tRNA binding site. This chain is Large ribosomal subunit protein bL19, found in Methylobacterium nodulans (strain LMG 21967 / CNCM I-2342 / ORS 2060).